A 496-amino-acid polypeptide reads, in one-letter code: Fascin (496 aa).

Belongs to the fascin family.

The protein resides in the cytoplasm. It localises to the cytoskeleton. In terms of biological role, acts as an actin bundling protein. In Strongylocentrotus purpuratus (Purple sea urchin), this protein is Fascin.